The following is a 381-amino-acid chain: Probable cyclic AMP-AMP-GMP nucleotide synthase (381 aa).

Positions 53 and 56 each coordinate GTP. Catalysis depends on residues Asp-69 and Asp-71. 2 residues coordinate Mg(2+): Asp-69 and Asp-71. Arg-109 is a binding site for GTP. The active site involves Asp-121. Mg(2+) is bound by residues Asp-121 and Asp-196. Residues Arg-197, Arg-204, Thr-205, Gln-210, and Arg-307 each coordinate GTP. Positions 348–381 are disordered; that stretch reads GTKFPFPGPQGGDRSGGFTAPTQPAEPQKTGRFA.

The protein belongs to the CD-NTase family. D02 subfamily. Mg(2+) is required as a cofactor.

It catalyses the reaction GTP + 2 ATP = 3',3',3'-cAAG + 3 diphosphate. In terms of biological role, cyclic nucleotide synthase (second messenger synthase) of a CBASS antivirus system. CBASS (cyclic oligonucleotide-based antiphage signaling system) provides immunity against bacteriophage. The CD-NTase protein synthesizes cyclic nucleotides in response to infection; these serve as specific second messenger signals. The signals activate a diverse range of effectors, leading to bacterial cell death and thus abortive phage infection. Its function is as follows. Cyclic nucleotide synthase, synthesizes a tricyclic nucleotide with AMP and GMP moieties, probably 3',3',3'-cyclic AMP-AMP-GMP (3'3'3'-cAAG). Controls the activity of the associated CBASS effector protein. The chain is Probable cyclic AMP-AMP-GMP nucleotide synthase from Salmonella paratyphi B (Salmonella enterica subsp. enterica serovar Paratyphi B).